The primary structure comprises 292 residues: Putative FNIP repeat-containing protein L281 (292 aa).

An FNIP repeat occupies 95-134 (FNKSIDDIPSTITHLSLGAAFNGEVSNIPTSVTHLKLGVS).

In Acanthamoeba polyphaga mimivirus (APMV), this protein is Putative FNIP repeat-containing protein L281.